The sequence spans 71 residues: Omega-conotoxin-like CnVIIE (71 aa).

The signal sequence occupies residues 1 to 22 (MKLTCVVIVAVLLLTACQLITA). The propeptide occupies 23-45 (DDSRGTQKHRALRSDTKLSMSTR). Disulfide bonds link C46-C61, C53-C65, and C60-C70. At P52 the chain carries 4-hydroxyproline; partial. Position 70 is a cysteine amide (C70).

Belongs to the conotoxin M superfamily. As to expression, expressed by the venom duct.

Its subcellular location is the secreted. In terms of biological role, omega-conotoxins act at presynaptic membranes, they bind and block voltage-gated calcium channels (Cav). In Conus consors (Singed cone), this protein is Omega-conotoxin-like CnVIIE.